Consider the following 75-residue polypeptide: Lysis protein (75 aa).

The span at methionine 1 to threonine 16 shows a compositional bias: polar residues. Residues methionine 1–cysteine 29 form a disordered region. The chain crosses the membrane as a helical span at residues leucine 38–leucine 60.

This sequence belongs to the Leviviricetes lysis protein family.

It localises to the host cell inner membrane. Its subcellular location is the host cell outer membrane. Functionally, induces the formation of specific membrane adhesion sites between the inner and outer membranes, apparently leading to host cell lysis. Lysis may be performed via activation of host murein hydrolases. The sequence is that of Lysis protein from Escherichia phage MS2 (Bacteriophage MS2).